Reading from the N-terminus, the 210-residue chain is Pyridoxine/pyridoxamine 5'-phosphate oxidase (210 aa).

Substrate contacts are provided by residues 7-10 (RQSY) and Lys-65. FMN is bound by residues 60–65 (RIVLIK), 75–76 (YT), Arg-81, Lys-82, and Gln-104. The substrate site is built by Tyr-122, Arg-126, and Ser-130. Residues 139–140 (QS) and Trp-182 each bind FMN. 188 to 190 (RLH) lines the substrate pocket. Residue Arg-192 coordinates FMN.

The protein belongs to the pyridoxamine 5'-phosphate oxidase family. In terms of assembly, homodimer. The cofactor is FMN.

It catalyses the reaction pyridoxamine 5'-phosphate + O2 + H2O = pyridoxal 5'-phosphate + H2O2 + NH4(+). The enzyme catalyses pyridoxine 5'-phosphate + O2 = pyridoxal 5'-phosphate + H2O2. Its pathway is cofactor metabolism; pyridoxal 5'-phosphate salvage; pyridoxal 5'-phosphate from pyridoxamine 5'-phosphate: step 1/1. The protein operates within cofactor metabolism; pyridoxal 5'-phosphate salvage; pyridoxal 5'-phosphate from pyridoxine 5'-phosphate: step 1/1. Catalyzes the oxidation of either pyridoxine 5'-phosphate (PNP) or pyridoxamine 5'-phosphate (PMP) into pyridoxal 5'-phosphate (PLP). In Bordetella petrii (strain ATCC BAA-461 / DSM 12804 / CCUG 43448), this protein is Pyridoxine/pyridoxamine 5'-phosphate oxidase.